Reading from the N-terminus, the 251-residue chain is Octanoyltransferase (251 aa).

One can recognise a BPL/LPL catalytic domain in the interval Ala56 to Ser237. Substrate is bound by residues Arg96–His103, Ala168–Gly170, and Gly181–Ser183. Cys199 (acyl-thioester intermediate) is an active-site residue.

The protein belongs to the LipB family.

It is found in the cytoplasm. It catalyses the reaction octanoyl-[ACP] + L-lysyl-[protein] = N(6)-octanoyl-L-lysyl-[protein] + holo-[ACP] + H(+). It participates in protein modification; protein lipoylation via endogenous pathway; protein N(6)-(lipoyl)lysine from octanoyl-[acyl-carrier-protein]: step 1/2. In terms of biological role, catalyzes the transfer of endogenously produced octanoic acid from octanoyl-acyl-carrier-protein onto the lipoyl domains of lipoate-dependent enzymes. Lipoyl-ACP can also act as a substrate although octanoyl-ACP is likely to be the physiological substrate. This Burkholderia ambifaria (strain MC40-6) protein is Octanoyltransferase.